A 158-amino-acid chain; its full sequence is Cyclic pyranopterin monophosphate synthase (158 aa).

Substrate contacts are provided by residues 76 to 78 (LCH) and 114 to 115 (ME). The active site involves D129.

It belongs to the MoaC family. In terms of assembly, homohexamer; trimer of dimers.

The catalysed reaction is (8S)-3',8-cyclo-7,8-dihydroguanosine 5'-triphosphate = cyclic pyranopterin phosphate + diphosphate. The protein operates within cofactor biosynthesis; molybdopterin biosynthesis. Catalyzes the conversion of (8S)-3',8-cyclo-7,8-dihydroguanosine 5'-triphosphate to cyclic pyranopterin monophosphate (cPMP). The polypeptide is Cyclic pyranopterin monophosphate synthase (Shewanella halifaxensis (strain HAW-EB4)).